Consider the following 399-residue polypeptide: Sex hormone-binding globulin (399 aa).

The signal sequence occupies residues 1-29 (MENRDSVASLLLLLLLLPPPHTHQGQVLR). 2 consecutive Laminin G-like domains span residues 43–214 (RYLS…LGNC) and 221–387 (GLFF…THSC). Residue asparagine 160 is glycosylated (N-linked (GlcNAc...) asparagine). A disulfide bond links cysteine 191 and cysteine 214. Residues asparagine 270, asparagine 353, asparagine 377, and asparagine 393 are each glycosylated (N-linked (GlcNAc...) asparagine). Cysteine 359 and cysteine 387 are disulfide-bonded.

Homodimer. In terms of processing, differentially glycosylated in liver (SHBG) and testis (ABP).

The protein resides in the secreted. Its function is as follows. Functions as an androgen transport protein, but may also be involved in receptor mediated processes. Each dimer binds one molecule of steroid. Specific for 5-alpha-dihydrotestosterone, testosterone, and 17-beta-estradiol. Regulates the plasma metabolic clearance rate of steroid hormones by controlling their plasma concentration. This is Sex hormone-binding globulin (SHBG) from Phodopus sungorus (Striped hairy-footed hamster).